We begin with the raw amino-acid sequence, 498 residues long: U4/U6 small nuclear ribonucleoprotein Prp31 (498 aa).

Coiled-coil stretches lie at residues 84-119 (EAAP…KYSK) and 180-214 (DEEL…MSFI). Residues 214-332 (IAPNLSIIVG…IERKFDKWQE (119 aa)) enclose the Nop domain. A disordered region spans residues 333–356 (PPPVKQVKPLPAPLDGQRKKRGGR). The short motif at 350–363 (RKKRGGRRYRKMKE) is the Nuclear localization signal (NLS) element.

The protein belongs to the PRP31 family. Identified in the spliceosome B complex. Component of the U4/U6-U5 tri-snRNP complex. Component of some MLL1/MLL complex.

Its subcellular location is the nucleus. It is found in the nucleus speckle. It localises to the cajal body. In terms of biological role, involved in pre-mRNA splicing as component of the spliceosome. Required for the assembly of the U4/U5/U6 tri-snRNP complex, one of the building blocks of the spliceosome. The protein is U4/U6 small nuclear ribonucleoprotein Prp31 (prpf31) of Xenopus tropicalis (Western clawed frog).